Here is a 177-residue protein sequence, read N- to C-terminus: Inorganic pyrophosphatase (177 aa).

Substrate contacts are provided by K30, R44, and Y56. Mg(2+) is bound by residues D66, D71, and D103. Residue Y142 participates in substrate binding.

This sequence belongs to the PPase family. Homohexamer. Mg(2+) serves as cofactor.

It localises to the cytoplasm. It carries out the reaction diphosphate + H2O = 2 phosphate + H(+). Its function is as follows. Catalyzes the hydrolysis of inorganic pyrophosphate (PPi) forming two phosphate ions. The chain is Inorganic pyrophosphatase from Caulobacter vibrioides (strain ATCC 19089 / CIP 103742 / CB 15) (Caulobacter crescentus).